A 446-amino-acid chain; its full sequence is Exodeoxyribonuclease 7 large subunit (446 aa).

This sequence belongs to the XseA family. In terms of assembly, heterooligomer composed of large and small subunits.

It localises to the cytoplasm. It carries out the reaction Exonucleolytic cleavage in either 5'- to 3'- or 3'- to 5'-direction to yield nucleoside 5'-phosphates.. Its function is as follows. Bidirectionally degrades single-stranded DNA into large acid-insoluble oligonucleotides, which are then degraded further into small acid-soluble oligonucleotides. This chain is Exodeoxyribonuclease 7 large subunit, found in Streptococcus gordonii (strain Challis / ATCC 35105 / BCRC 15272 / CH1 / DL1 / V288).